The following is a 198-amino-acid chain: MAKILVLYYSMYGHIETMAHAVAEGAKKVDGAEVIIKRVPETMPPEIFAKAGGKTQNAPVATPQELADYDAIIFGTPTRFGNMPGQMRTFLDQTGGLWASGALYGKLGSVFSSTGTGGGQEQTITSTWTTLAHHGMVIVPIGYAAQELFDVSQVRGGTPYGATTIAGGDGSRQPSQEELSIARYQGEYVAGLAVKLNG.

A Flavodoxin-like domain is found at 4–189; it reads ILVLYYSMYG…SIARYQGEYV (186 aa). Residues 10–15 and 78–80 each bind FMN; these read SMYGHI and TRF. Residue tyrosine 12 coordinates NAD(+). Tryptophan 98 lines the substrate pocket. Residues 113–118 and histidine 133 each bind FMN; that span reads STGTGG.

This sequence belongs to the WrbA family. Requires FMN as cofactor.

The catalysed reaction is a quinone + NADH + H(+) = a quinol + NAD(+). It catalyses the reaction a quinone + NADPH + H(+) = a quinol + NADP(+). The sequence is that of NAD(P)H dehydrogenase (quinone) from Salmonella paratyphi A (strain ATCC 9150 / SARB42).